A 227-amino-acid polypeptide reads, in one-letter code: UPF0758 protein LPC_1989 (227 aa).

An MPN domain is found at 102 to 225 (QLSNTQQTYA…YSIFAENKWV (124 aa)). Zn(2+) is bound by residues His-173, His-175, and Asp-186. Residues 173–186 (HNHPSGLSDASQQD) carry the JAMM motif motif.

It belongs to the UPF0758 family.

The chain is UPF0758 protein LPC_1989 from Legionella pneumophila (strain Corby).